Here is a 563-residue protein sequence, read N- to C-terminus: Tripeptidyl-peptidase 1 (563 aa).

The signal sequence occupies residues 1–19; it reads MGLQACLLGLFALILSGKC. Residues 20–195 constitute a propeptide, removed in mature form; sequence SYSPEPDQRR…PEPQVTGTVG (176 aa). Cys111 and Cys122 are joined by a disulfide. A Peptidase S53 domain is found at 199-563; it reads GVTPSVIRKR…PALLKTLLNP (365 aa). N-linked (GlcNAc...) asparagine glycans are attached at residues Asn210 and Asn222. Active-site charge relay system residues include Glu272 and Asp276. Asn286, Asn313, and Asn443 each carry an N-linked (GlcNAc...) asparagine glycan. 2 cysteine pairs are disulfide-bonded: Cys365-Cys526 and Cys522-Cys537. The active-site Charge relay system is the Ser475. Asp517 and Val518 together coordinate Ca(2+). Ca(2+) is bound by residues Gly539, Gly541, and Asp543.

In terms of assembly, monomer. Interacts with CLN5. Interacts with CLN3. It depends on Ca(2+) as a cofactor. In terms of processing, activated by autocatalytic proteolytical processing upon acidification. N-glycosylation is required for processing and activity. Detected in all tissues examined with highest levels in heart and placenta and relatively similar levels in other tissues.

It is found in the lysosome. The protein localises to the melanosome. The enzyme catalyses Release of an N-terminal tripeptide from a polypeptide, but also has endopeptidase activity.. Its activity is regulated as follows. Inhibited by diisopropyl fluorophosphate (DFP). In terms of biological role, lysosomal serine protease with tripeptidyl-peptidase I activity. May act as a non-specific lysosomal peptidase which generates tripeptides from the breakdown products produced by lysosomal proteinases. Requires substrates with an unsubstituted N-terminus. This Homo sapiens (Human) protein is Tripeptidyl-peptidase 1 (TPP1).